A 108-amino-acid chain; its full sequence is Tetrahydromethanopterin S-methyltransferase subunit B (108 aa).

A helical transmembrane segment spans residues 79–99 (GMFFGFWVTMAILVLVTILAV).

This sequence belongs to the MtrB family. As to quaternary structure, the complex is composed of 8 subunits; MtrA, MtrB, MtrC, MtrD, MtrE, MtrF, MtrG and MtrH.

The protein resides in the cell membrane. It catalyses the reaction 5-methyl-5,6,7,8-tetrahydromethanopterin + coenzyme M + 2 Na(+)(in) = 5,6,7,8-tetrahydromethanopterin + methyl-coenzyme M + 2 Na(+)(out). Its pathway is one-carbon metabolism; methanogenesis from CO(2); methyl-coenzyme M from 5,10-methylene-5,6,7,8-tetrahydromethanopterin: step 2/2. In terms of biological role, part of a complex that catalyzes the formation of methyl-coenzyme M and tetrahydromethanopterin from coenzyme M and methyl-tetrahydromethanopterin. This is an energy-conserving, sodium-ion translocating step. The chain is Tetrahydromethanopterin S-methyltransferase subunit B from Methanococcus maripaludis (strain C7 / ATCC BAA-1331).